We begin with the raw amino-acid sequence, 334 residues long: D-fructose 1,6-bisphosphatase class 2/sedoheptulose 1,7-bisphosphatase (334 aa).

Mn(2+)-binding residues include D33, E57, D85, and E88. Substrate is bound by residues 88-90, Y119, 164-166, and 186-188; these read EGT, RAR, and DGD. A Mn(2+)-binding site is contributed by E213.

It belongs to the FBPase class 2 family. Homotetramer. Requires Mn(2+) as cofactor.

It catalyses the reaction beta-D-fructose 1,6-bisphosphate + H2O = beta-D-fructose 6-phosphate + phosphate. The enzyme catalyses D-sedoheptulose 1,7-bisphosphate + H2O = D-sedoheptulose 7-phosphate + phosphate. It participates in carbohydrate biosynthesis; Calvin cycle. Catalyzes the hydrolysis of fructose 1,6-bisphosphate (Fru 1,6-P2) and sedoheptulose 1,7-bisphosphate (Sed 1,7-P2) to fructose 6-phosphate and sedoheptulose 7-phosphate, respectively. In Synechococcus sp. (strain CC9311), this protein is D-fructose 1,6-bisphosphatase class 2/sedoheptulose 1,7-bisphosphatase.